The sequence spans 551 residues: Vacuolar protein sorting-associated protein 17 (551 aa).

The disordered stretch occupies residues M1 to S100. Composition is skewed to polar residues over residues A29–M39 and T46–N64. In terms of domain architecture, PX spans L108–Y227. A coiled-coil region spans residues I359–D385. Positions R474–S504 are disordered. The span at V480–S504 shows a compositional bias: polar residues. S544 carries the phosphoserine modification.

It belongs to the VPS17 family. In terms of assembly, component of the retromer complex which consists of VPS29, VPS26, VPS35, VPS5 and VPS17. Component of a retromer subcomplex consisting of VPS5 and VPS17. In terms of processing, phosphorylated on one or more serine residues.

The protein resides in the endomembrane system. Component of the membrane-associated retromer complex which is essential in endosome-to-Golgi retrograde transport. The VPS5-VPS17 subcomplex may assemble onto the membrane to promote vesicle formation and is required for recycling the vacuolar protein-sorting receptor. Required for the sorting and delivery of a subset of soluble vacuolar hydrolases. Required for retention of late Golgi membrane proteins and vacuolar biogenesis. Involved in vacuolar fragmentation during hyperosmotic stress. The sequence is that of Vacuolar protein sorting-associated protein 17 from Saccharomyces cerevisiae (strain ATCC 204508 / S288c) (Baker's yeast).